The sequence spans 1084 residues: Myosin heavy chain, skeletal muscle (1084 aa).

Disordered regions lie at residues 1 to 20, 270 to 292, and 298 to 317; these read SAET…KTKE, EIEA…SREL, and RLEE…KKRE. The alpha-helical tailpiece (S2) stretch occupies residues 1–258; the sequence is SAETEKEMAN…SKIEDEQALM (258 aa). The tract at residues 259-1084 is rodlike tail (S2 and LMM domains); sequence TNLQRIEELE…DVHSKVISEE (826 aa). Residues 273 to 292 show a composition bias toward basic and acidic residues; it reads AERASRAKAEKQRSDLSREL. The stretch at 455–1084 forms a coiled coil; the sequence is QAFTQQIEGL…DVHSKVISEE (630 aa).

As to quaternary structure, muscle myosin is a hexameric protein that consists of 2 heavy chain subunits (MHC), 2 alkali light chain subunits (MLC) and 2 regulatory light chain subunits (MLC-2).

The protein localises to the cytoplasm. The protein resides in the myofibril. Its function is as follows. Muscle contraction. In Oryctolagus cuniculus (Rabbit), this protein is Myosin heavy chain, skeletal muscle.